The chain runs to 875 residues: E3 SUMO-protein ligase SIZ1 (875 aa).

In terms of domain architecture, SAP spans 12–46; sequence LAYFRIKELKDILNQLGLPKQGKKQDLIDRVLALL. A PHD-type zinc finger spans residues 114–169; sequence KVRCICSSTMVNDSMIQCEDQRCQVWQHLNCVLIPDKPGESAEVPPVFYCELCRLS. Residues 349–430 form an SP-RING-type zinc finger; that stretch reads SDLEVVAESV…FNRITSLLRN (82 aa). Zn(2+) is bound by residues Cys380, His382, Cys403, and Cys406. The segment at 796-820 is disordered; that stretch reads GGGGNEEPAPADVNSQPQIPSTETG. Positions 808–819 are enriched in polar residues; the sequence is VNSQPQIPSTET.

This sequence belongs to the PIAS family.

Its subcellular location is the nucleus. It participates in protein modification; protein sumoylation. Probable SUMO E3 ligase that may regulate Pi starvation responses. The chain is E3 SUMO-protein ligase SIZ1 (SIZ1) from Oryza sativa subsp. japonica (Rice).